The following is a 351-amino-acid chain: Trans-enoyl reductase grgB (351 aa).

Residues 10–346 (GAESGGYRLA…GKVHAKKLVV (337 aa)) enclose the Enoyl reductase (ER) domain. Residues 161–164 (ATAT), 184–187 (SPAN), Y202, 249–250 (LE), and 339–340 (VH) contribute to the NADP(+) site.

Belongs to the zinc-containing alcohol dehydrogenase family.

The protein operates within secondary metabolite biosynthesis. In terms of biological role, trans-enoyl reductase; part of the gene cluster that mediates the biosynthesis of gregatin A, a fungal polyketide featuring an alkylated furanone core. The PKS grgA synthesizes C11 and C4 polyketide chains in the presence and absence of the trans-enoyl reductase grgB, respectively. The polyketide transferase grgF is then responsible for the fusion of the two carbon chains to produce the furanone skeleton of gregatin A. Next, the cytochrome P450 monooxygenase grgG accepts performs the oxidative cyclization to furnish the gregatin scaffold and leads to the formation of desmethylgregatin A. Finally, the O-methyltransferase grgD methylates the carboxyl group of desmethylgregatin A to provide gregatin A. The chain is Trans-enoyl reductase grgB from Penicillium sp.